The following is a 216-amino-acid chain: Probable GTP-binding protein EngB (216 aa).

One can recognise an EngB-type G domain in the interval 37–214 (AGLEVAFAGR…RAAMIKLIAE (178 aa)). GTP contacts are provided by residues 45 to 52 (GRSNVGKS), 72 to 76 (GRTQE), 92 to 95 (DMPG), 159 to 162 (TKAD), and 193 to 195 (TSS). Residues Ser52 and Thr74 each coordinate Mg(2+).

It belongs to the TRAFAC class TrmE-Era-EngA-EngB-Septin-like GTPase superfamily. EngB GTPase family. It depends on Mg(2+) as a cofactor.

Necessary for normal cell division and for the maintenance of normal septation. This is Probable GTP-binding protein EngB from Rhodopseudomonas palustris (strain BisB18).